Consider the following 500-residue polypeptide: Histidine--tRNA ligase (500 aa).

This sequence belongs to the class-II aminoacyl-tRNA synthetase family. As to quaternary structure, homodimer.

It localises to the cytoplasm. It catalyses the reaction tRNA(His) + L-histidine + ATP = L-histidyl-tRNA(His) + AMP + diphosphate + H(+). The sequence is that of Histidine--tRNA ligase (hisS) from Mesorhizobium japonicum (strain LMG 29417 / CECT 9101 / MAFF 303099) (Mesorhizobium loti (strain MAFF 303099)).